A 228-amino-acid chain; its full sequence is L-ribulose-5-phosphate 4-epimerase UlaF (228 aa).

Substrate-binding positions include 26–27, 43–44, and 72–73; these read GN, SG, and SS. Zn(2+) contacts are provided by aspartate 74, histidine 93, and histidine 95. The active-site Proton donor/acceptor is the aspartate 118. Histidine 167 serves as a coordination point for Zn(2+). Tyrosine 225 functions as the Proton donor/acceptor in the catalytic mechanism.

The protein belongs to the aldolase class II family. AraD/FucA subfamily. The cofactor is Zn(2+).

The enzyme catalyses L-ribulose 5-phosphate = D-xylulose 5-phosphate. Its pathway is cofactor degradation; L-ascorbate degradation; D-xylulose 5-phosphate from L-ascorbate: step 4/4. Catalyzes the isomerization of L-ribulose 5-phosphate to D-xylulose 5-phosphate. Is involved in the anaerobic L-ascorbate utilization. The chain is L-ribulose-5-phosphate 4-epimerase UlaF from Escherichia coli (strain SE11).